The primary structure comprises 719 residues: Forkhead box protein K1 (719 aa).

Position 2 is an N-acetylalanine (alanine 2). The tract at residues 2–40 (AEVGEDSGARALLALRSAPCSPVLCAAAAAAAFPATTSP) is interaction with SIN3A and SIN3B. The segment at 35–67 (PATTSPPPPAQPPPGPPALPAEPGPGPVPSTVA) is disordered. Residues 38–62 (TSPPPPAQPPPGPPALPAEPGPGPV) show a composition bias toward pro residues. Residues 81-406 (AASVRQSPGP…PLSSRSAPAS (326 aa)) form a required for interaction with FOXO4 and MEF2C region. Serine 87 is modified (phosphoserine). Residues 109–161 (VTIGRNSSQGSVDLSMGLSSFISRRHLQLSFQEPHFYLRCLGKNGVFVDGAFQ) form the FHA domain. 2 positions are modified to omega-N-methylarginine: arginine 147 and arginine 177. 4 positions are modified to phosphoserine: serine 199, serine 209, serine 225, and serine 229. A phosphothreonine mark is found at threonine 231 and threonine 233. A phosphoserine mark is found at serine 239, serine 243, serine 281, and serine 285. The fork-head DNA-binding region spans 291-386 (KPPYSYAQLI…EQAFRKRRQR (96 aa)). A disordered region spans residues 399–443 (SSRSAPASPTHPGLMSPRSSGLQTPECLSREGSPIPHDPDLGSKL). Serine 402 and serine 406 each carry phosphoserine. At threonine 408 the chain carries Phosphothreonine. Serine 414 is modified (phosphoserine). Phosphothreonine is present on threonine 422. 3 positions are modified to phosphoserine: serine 427, serine 431, and serine 445. Residues 665 to 685 (AANAAPTPAASTTTSASSSGE) show a composition bias toward low complexity. The disordered stretch occupies residues 665 to 719 (AANAAPTPAASTTTSASSSGEPEVKRSRVEEPGGTATTQPTAMAATGPQGPGTGE). Residues 686–695 (PEVKRSRVEE) show a composition bias toward basic and acidic residues. Over residues 696–712 (PGGTATTQPTAMAATGP) the composition is skewed to low complexity.

As to quaternary structure, interacts with SIN3A and SIN3B (via PAH2) to form a complex which represses transcription. Component of SIN3A-, but not SIN3B-, containing multiprotein complexes. Interacts with FOXO4 and MEF2C; both interactions inhibit FOXO4 and MEF2C transactivation activity. Interacts (when phosphorylated) with YWHAE/14-3-3-epsilon; promotes sequestration in the cytoplasm and leads to impaired ability to bind DNA. Interacts with FHL2. Interacts with SRF. Interacts with DVL2 and DVL3; the interaction induces DVL2 nuclear translocation. Interacts with BAP1 (when phosphorylated). Accessory component of the polycomb repressive deubiquitinase (PR-DUB) complex, at least composed of BAP1, one of ASXL1, ASXL2 or (probably) ASXL3 and one of MBD5 or MBD6. The PR-DUB core associates with a number of accessory proteins, including FOXK1, FOXK2, KDM1B, HCFC1 and OGT. In terms of processing, phosphorylation by GSK3 (GSK3A or GSK3B) promotes interaction with YWHAE/14-3-3-epsilon and retention in the cytoplasm. In response to mTORC1 signaling, phosphorylation by GSK3 is prevented, leading to translocation to the nucleus. In terms of tissue distribution, expressed in tissues and cells in which the myoglobin gene is transcriptionally active including cardiac and skeletal myocytes, brain and kidney. In the adult brain, expressed in the piriform cortex and the indusium griseum. In the hippocampus, expression is localized to the dentate gyrus and CA3 area. In the cerebellum, expression is confined to the Purkinje cell layer. Present in neuroretinal cells: expressed in rod bipolar cells, amacrine cells and ganglion cells (at protein level).

It is found in the nucleus. Its subcellular location is the cytoplasm. Its function is as follows. Transcriptional regulator involved in different processes such as glucose metabolism, aerobic glycolysis, muscle cell differentiation and autophagy. Recognizes and binds the forkhead DNA sequence motif (5'-GTAAACA-3') and can both act as a transcription activator or repressor, depending on the context. Together with FOXK2, acts as a key regulator of metabolic reprogramming towards aerobic glycolysis, a process in which glucose is converted to lactate in the presence of oxygen. Acts by promoting expression of enzymes for glycolysis (such as hexokinase-2 (HK2), phosphofructokinase, pyruvate kinase (PKLR) and lactate dehydrogenase), while suppressing further oxidation of pyruvate in the mitochondria by up-regulating pyruvate dehydrogenase kinases PDK1 and PDK4. Probably plays a role in gluconeogenesis during overnight fasting, when lactate from white adipose tissue and muscle is the main substrate. Involved in mTORC1-mediated metabolic reprogramming: in response to mTORC1 signaling, translocates into the nucleus and regulates the expression of genes associated with glycolysis and downstream anabolic pathways, such as HIF1A, thereby regulating glucose metabolism. Together with FOXK2, acts as a negative regulator of autophagy in skeletal muscle: in response to starvation, enters the nucleus, binds the promoters of autophagy genes and represses their expression, preventing proteolysis of skeletal muscle proteins. Acts as a transcriptional regulator of the myogenic progenitor cell population in skeletal muscle. Binds to the upstream enhancer region (CCAC box) of myoglobin (MB) gene, regulating the myogenic progenitor cell population. Promotes muscle progenitor cell proliferation by repressing the transcriptional activity of FOXO4, thereby inhibiting myogenic differentiation. Involved in remodeling processes of adult muscles that occur in response to physiological stimuli. Required to correct temporal orchestration of molecular and cellular events necessary for muscle repair. Represses myogenic differentiation by inhibiting MEFC activity. Positively regulates Wnt/beta-catenin signaling by translocating DVL into the nucleus. Reduces virus replication, probably by binding the interferon stimulated response element (ISRE) to promote antiviral gene expression. Accessory component of the polycomb repressive deubiquitinase (PR-DUB) complex; recruits the PR-DUB complex to specific FOXK1-bound genes. The polypeptide is Forkhead box protein K1 (Mus musculus (Mouse)).